A 955-amino-acid polypeptide reads, in one-letter code: Anoctamin-4 (955 aa).

Topologically, residues 1 to 352 are extracellular; it reads MEASSSGITN…FGEKIGLYFA (352 aa). A disordered region spans residues 72–100; it reads CKDDDSLLHPGNLTSTSDDASRLEAGGET. N-linked (GlcNAc...) asparagine glycans are attached at residues asparagine 83, asparagine 105, asparagine 257, and asparagine 288. Residues 353–373 form a helical membrane-spanning segment; sequence WLGWYTGMLFPAAFIGLFVFL. Residues 374–424 are Cytoplasmic-facing; that stretch reads YGVTTLDHSQVSKEVCQATDIIMCPVCDKYCPFMRLSDSCVYAKVTHLFDN. A helical membrane pass occupies residues 425–445; it reads GATVFFAVFMAVWATVFLEFW. At 446–505 the chain is on the extracellular side; sequence KRRRAVIAYDWDLIDWEEEEEEIRPQFEAKYSKKERMNPISGKPEPYQAFTDKCSRLIVS. A helical transmembrane segment spans residues 506–526; the sequence is ASGIFFMICVVIAAVFGIVIY. Over 527-547 the chain is Cytoplasmic; it reads RVVTVSTFAAFKWALIRNNSQ. Residues 548 to 568 traverse the membrane as a helical segment; that stretch reads VATTGTAVCINFCIIMLLNVL. The Extracellular segment spans residues 569-595; the sequence is YEKVALLLTNLEQPRTESEWENSFTLK. A helical transmembrane segment spans residues 596–616; sequence MFLFQFVNLNSSTFYIAFFLG. The Cytoplasmic portion of the chain corresponds to 617–715; sequence RFTGHPGAYL…AYGLFDEYLE (99 aa). A helical membrane pass occupies residues 716 to 736; it reads MILQFGFTTIFVAAFPLAPLL. At 737–768 the chain is on the extracellular side; sequence ALLNNIIEIRLDAYKFVTQWRRPLASRAKDIG. The helical transmembrane segment at 769–789 threads the bilayer; it reads IWYGILEGIGILSVITNAFVI. Over 790-885 the chain is Cytoplasmic; sequence AITSDFIPRL…QFWHVLAARL (96 aa). A helical transmembrane segment spans residues 886 to 906; the sequence is AFIIVFEHLVFCIKHLISYLI. Over 907–955 the chain is Extracellular; the sequence is PDLPKDLRDRMRREKYLIQEMMYEAELERLQKERKERKKNGKAHHNEWP.

It belongs to the anoctamin family.

The protein resides in the cell membrane. It carries out the reaction a 1,2-diacyl-sn-glycero-3-phospho-L-serine(in) = a 1,2-diacyl-sn-glycero-3-phospho-L-serine(out). It catalyses the reaction a beta-D-galactosyl-(1&lt;-&gt;1')-N-acylsphing-4-enine(out) = a beta-D-galactosyl-(1&lt;-&gt;1')-N-acylsphing-4-enine(in). The catalysed reaction is a 1,2-diacyl-sn-glycero-3-phosphocholine(in) = a 1,2-diacyl-sn-glycero-3-phosphocholine(out). Its function is as follows. Has calcium-dependent phospholipid scramblase activity; scrambles phosphatidylserine, phosphatidylcholine and galactosylceramide. Does not exhibit calcium-activated chloride channel (CaCC) activity. The polypeptide is Anoctamin-4 (ANO4) (Homo sapiens (Human)).